A 33-amino-acid chain; its full sequence is Omega-conotoxin-like Vn2 (33 aa).

3 disulfide bridges follow: C3/C20, C10/C24, and C19/C28. P33 carries the post-translational modification Proline amide.

Expressed by the venom duct.

It is found in the secreted. Omega-conotoxins act at presynaptic membranes, they bind and block voltage-gated calcium channels (Cav). Has strong insecticidal properties at a dose of only 100 pmol/g of body weight (when injected into the haemocoel of the wax moth G.mellonella larvae). Provoques tremor and uncontrolled movements in insect larvae, that are typical symptoms caused by neurotoxins. On fish G.niger, intraperitoneal injection of the toxin causes full extension of the fins, change in posture, breathing difficulties (at 30 and 100 pmol/g body weight) and death (at 100 pmol/g body weight). This Conus ventricosus (Mediterranean cone) protein is Omega-conotoxin-like Vn2.